We begin with the raw amino-acid sequence, 459 residues long: uncharacterized protein (459 aa).

This is an uncharacterized protein from Orgyia pseudotsugata (Douglas-fir tussock moth).